The sequence spans 130 residues: Large ribosomal subunit protein bL20 (130 aa).

Belongs to the bacterial ribosomal protein bL20 family.

Binds directly to 23S ribosomal RNA and is necessary for the in vitro assembly process of the 50S ribosomal subunit. It is not involved in the protein synthesizing functions of that subunit. In Clavibacter sepedonicus (Clavibacter michiganensis subsp. sepedonicus), this protein is Large ribosomal subunit protein bL20.